A 691-amino-acid polypeptide reads, in one-letter code: Glycine--tRNA ligase beta subunit (691 aa).

Belongs to the class-II aminoacyl-tRNA synthetase family. In terms of assembly, tetramer of two alpha and two beta subunits.

Its subcellular location is the cytoplasm. The catalysed reaction is tRNA(Gly) + glycine + ATP = glycyl-tRNA(Gly) + AMP + diphosphate. In Buchnera aphidicola subsp. Schizaphis graminum (strain Sg), this protein is Glycine--tRNA ligase beta subunit.